We begin with the raw amino-acid sequence, 134 residues long: Transcription antitermination protein NusB (134 aa).

Belongs to the NusB family.

Functionally, involved in transcription antitermination. Required for transcription of ribosomal RNA (rRNA) genes. Binds specifically to the boxA antiterminator sequence of the ribosomal RNA (rrn) operons. The polypeptide is Transcription antitermination protein NusB (Halothermothrix orenii (strain H 168 / OCM 544 / DSM 9562)).